Here is a 376-residue protein sequence, read N- to C-terminus: Putative transmembrane protein 183BP (376 aa).

Disordered stretches follow at residues 1-20 (MARG…AMPK) and 102-127 (AQEE…ELDG). A helical transmembrane segment spans residues 300-320 (LNFIFIPIVMGMIFTLFTINV).

Belongs to the TMEM183 family. As to expression, expressed in brain, lung, pancreas, thymus, intestine and blood. Not detected in heart, placenta, liver, muscle, kidney, spleen, prostate, testis, ovary and colon.

The protein localises to the membrane. In Homo sapiens (Human), this protein is Putative transmembrane protein 183BP.